A 230-amino-acid polypeptide reads, in one-letter code: Large ribosomal subunit protein uL1c (230 aa).

This sequence belongs to the universal ribosomal protein uL1 family. In terms of assembly, part of the 50S ribosomal subunit.

The protein resides in the plastid. It localises to the chloroplast. Binds directly to 23S rRNA. Might be involved in E site tRNA release (Potential). The protein is Large ribosomal subunit protein uL1c (rpl1) of Thalassiosira pseudonana (Marine diatom).